The chain runs to 517 residues: MANNNIMGIDFGTHFACVGIFKNERIEICPNQQGNRTTPSVVSFVGDDKLVGDEAKAQMDRNPLNTIYDVKRLLGRKTTDELFDHEVKKLSFKVTTYEDNNEKIEFQVNYKSNVVTLTPIEIATSILEQIKHTAETFIGGESIKKAVISVPTDFTEKQRNDLKEAATAAGITVVRMIHEHSAVALAYGYDQVKECSETTNESKESNVMVFDLGGSGVSASMIRVRSKLFEMIGNVSDHTVSGEHFDHVLVQHFTQEFNRKYRCDLTDNARSKAKLKSACEKAKRNLSNMTQAALEIDSLYDGRDFFTNITRARFEDMASGLIKGSINAVSQLLEKCNMTKEQVDKVLLVGGASRIPSVQNQLLNFFDNRQDILERSMNQEEVVAHGTTIQATILAADKSNQSLTCNSSNISMGAPFSAKFTPVTIGIQDSNGNLIPIIPSSSLIPCKRTFTLNTSSENQDNLNMAVYQGSAPLAKDNQLVSRFIFKSSPNPIDVTFEIDNNNTLLIKSEQANYSIKF.

Belongs to the heat shock protein 70 family.

Functionally, may function in protein folding and assembly, and disassembly of protein complexes. This is Heat shock 70-related protein 5 from Dictyostelium discoideum (Social amoeba).